The sequence spans 185 residues: Thiol:disulfide interchange protein DsbE (185 aa).

The Cytoplasmic segment spans residues 1-4 (MKRN). The helical transmembrane segment at 5–25 (VLLLPLLIFLLIAAALLWQLA) threads the bilayer. Residues 26–185 (RNAQGDDPTN…WDRYSREAAQ (160 aa)) are Periplasmic-facing. The 139-residue stretch at 39-177 (ALTGKPVPAF…WESELKPLWD (139 aa)) folds into the Thioredoxin domain. C80 and C83 are joined by a disulfide.

Belongs to the thioredoxin family. DsbE subfamily.

It is found in the cell inner membrane. In terms of biological role, involved in disulfide bond formation. Catalyzes a late, reductive step in the assembly of periplasmic c-type cytochromes, probably the reduction of disulfide bonds of the apocytochrome c to allow covalent linkage with the heme. Possible subunit of a heme lyase. The polypeptide is Thiol:disulfide interchange protein DsbE (dsbE1) (Salmonella typhi).